A 158-amino-acid chain; its full sequence is Protein-export protein SecB (158 aa).

Belongs to the SecB family. In terms of assembly, homotetramer, a dimer of dimers. One homotetramer interacts with 1 SecA dimer.

It localises to the cytoplasm. In terms of biological role, one of the proteins required for the normal export of preproteins out of the cell cytoplasm. It is a molecular chaperone that binds to a subset of precursor proteins, maintaining them in a translocation-competent state. It also specifically binds to its receptor SecA. The protein is Protein-export protein SecB of Bartonella quintana (strain Toulouse) (Rochalimaea quintana).